The following is a 215-amino-acid chain: Vesicle-trafficking protein SEC22b (215 aa).

The Cytoplasmic portion of the chain corresponds to 1–194 (MVLLTMIARV…KYLNMRSTYA (194 aa)). Positions 6-119 (MIARVADGLP…YSFIEFDTFI (114 aa)) constitute a Longin domain. K38 carries the post-translational modification N6-acetyllysine. The region spanning 134–194 (NLGSINTELQ…KYLNMRSTYA (61 aa)) is the v-SNARE coiled-coil homology domain. S137 bears the Phosphoserine mark. Phosphothreonine is present on T140. Residues S164, S168, S174, and S177 each carry the phosphoserine modification. A helical; Anchor for type IV membrane protein membrane pass occupies residues 195–215 (KLAAVAVFFIMLIVYVRFWWL).

This sequence belongs to the synaptobrevin family. In terms of assembly, interacts with STX17. Component of two distinct SNARE complexes consisting of STX5, GOSR2/BOS1, BET1 and SEC22B or STX18, USE1L, BNIP1/SEC20L and SEC22B. YKT6 can probably replace SEC22B as subunit of either complex. Interacts with the COPII Sec23/24 complex composed of SEC23A and SEC24A; recruits SEC22B into COPII-coated vesicles to allow its transport from the endoplasmic reticulum to the Golgi. Interacts with BET1.

It localises to the endoplasmic reticulum membrane. Its subcellular location is the endoplasmic reticulum-Golgi intermediate compartment membrane. The protein localises to the golgi apparatus. The protein resides in the cis-Golgi network membrane. It is found in the trans-Golgi network membrane. It localises to the melanosome. SNARE involved in targeting and fusion of ER-derived transport vesicles with the Golgi complex as well as Golgi-derived retrograde transport vesicles with the ER. The sequence is that of Vesicle-trafficking protein SEC22b (Sec22b) from Cricetulus griseus (Chinese hamster).